Here is a 448-residue protein sequence, read N- to C-terminus: 5-hydroxytryptamine receptor 7 (448 aa).

The Extracellular portion of the chain corresponds to 1-86 (MMDVNSSGRP…INYGRVEKVV (86 aa)). 2 N-linked (GlcNAc...) asparagine glycosylation sites follow: Asn5 and Asn69. Residues 87–111 (IGSILTLITLLTIAGNCLVVISVCF) form a helical membrane-spanning segment. At 112–121 (VKKLRQPSNY) the chain is on the cytoplasmic side. Residues 122–143 (LIVSLALADLSVAVAVMPFVSV) form a helical membrane-spanning segment. The Extracellular segment spans residues 144 to 155 (TDLIGGKWIFGH). The helical transmembrane segment at 156–181 (FFCNVFIAMDVMCCTASIMTLCVISI) threads the bilayer. Cys158 and Cys234 are disulfide-bonded. Asp165 contributes to the serotonin binding site. The Cytoplasmic segment spans residues 182–201 (DRYLGITRPLTYPVRQNGKC). The chain crosses the membrane as a helical span at residues 202–222 (MAKMILSVWLLSASITLPPLF). Residues 223 to 240 (GWAQNVNDDKVCLISQDF) are Extracellular-facing. Residues 241–263 (GYTIYSTAVAFYIPMSVMLFMYY) form a helical membrane-spanning segment. Over 264 to 329 (QIYKAARKSA…SIFKREQKAA (66 aa)) the chain is Cytoplasmic. The chain crosses the membrane as a helical span at residues 330-355 (TTLGIIVGAFTVCWLPFFLLSTARPF). Residues 356–366 (ICGTSCSCIPL) are Extracellular-facing. Residues 367–390 (WVERTCLWLGYANSLINPFIYAFF) traverse the membrane as a helical segment. Residues 391–448 (NRDLRTTYRSLLQCQYRNINRKLSAAGMHEALKLAERPERSEFVLQNSDHCGKKGHDT) lie on the Cytoplasmic side of the membrane. Cys404 carries S-palmitoyl cysteine lipidation.

Belongs to the G-protein coupled receptor 1 family. Thalamus, hypothalamus, and the hippocampal rudiments.

Its subcellular location is the cell membrane. In terms of biological role, G-protein coupled receptor for 5-hydroxytryptamine (serotonin), a biogenic hormone that functions as a neurotransmitter, a hormone and a mitogen. Ligand binding causes a conformation change that triggers signaling via guanine nucleotide-binding proteins (G proteins) and modulates the activity of downstream effectors. HTR7 is coupled to G(s) G alpha proteins and mediates activation of adenylate cyclase activity. The polypeptide is 5-hydroxytryptamine receptor 7 (Rattus norvegicus (Rat)).